Here is a 1827-residue protein sequence, read N- to C-terminus: MTSLAERAAQLSPNARAALARELVRAGTTFPTDICEPVAVVGIGCRFPGNVTGPESFWQLLADGVDTIEQVPPDRWDADAFYDPDPSASGRMTTKWGGFVSDVDAFDADFFGITPREAVAMDPQHRILLEVAWEALEHAGIPPDSLSGTRTGVMMGLSSWDYTIVNIERRADIDAYLSTGTPHCAAVGRIAYLLGLRGPAVAVDTACSSSLVAIHLACQSLRLRETDVALAGGVQLTLSPFTAIALSKWSALSPTGRCNSFDANADGFVRGEGCGVVVLKRLADAVRDQDRVLAVVRGSATNSDGRSNGMTAPNALAQRDVITSALKLADVTPDSVNYVETHGTGTVLGDPIEFESLAATYGLGKGQGESPCALGSVKTNIGHLEAAAGVAGFIKAVLAVQRGHIPRNLHFTRWNPAIDASATRLFVPTESAPWPAAAGPRRAAVSSFGLSGTNAHVVVEQAPDTAVAAAGGMPYVSALNVSGKTAARVASAAAVLADWMSGPGAAAPLADVAHTLNRHRARHAKFATVIARDRAEAIAGLRALAAGQPRVGVVDCDQHAGGPGRVFVYSGQGSQWASMGQQLLANEPAFAKAVAELDPIFVDQVGFSLQQTLIDGDEVVGIDRIQPVLVGMQLALTELWRSYGVIPDAVIGHSMGEVSAAVVAGALTPEQGLRVITTRSRLMARLSGQGAMALLELDADAAEALIAGYPQVTLAVHASPRQTVIAGPPEQVDTVIAAVATQNRLARRVEVDVASHHPIIDPILPELRSALADLTPQPPSIPIISTTYESAQPVADADYWSANLRNPVRFHQAVTAAGVDHNTFIEISPHPVLTHALTDTLDPDGSHTVMSTMNRELDQTLYFHAQLAAVGVAASEHTTGRLVDLPPTPWHHQRFWVTDRSAMSELAATHPLLGAHIEMPRNGDHVWQTDVGTEVCPWLADHKVFGQPIMPAAGFAEIALAAASEALGTAADAVAPNIVINQFEVEQMLPLDGHTPLTTQLIRGGDSQIRVEIYSRTRGGEFCRHATAKVEQSPRECAHAHPEAQGPATGTTVSPADFYALLRQTGQHHGPAFAALSRIVRLADGSAETEISIPDEAPRHPGYRLHPVVLDAALQSVGAAIPDGEIAGSAEASYLPVSFETIRVYRDIGRHVRCRAHLTNLDGGTGKMGRIVLINDAGHIAAEVDGIYLRRVERRAVPLPLEQKIFDAEWTESPIAAVPAPEPAAETTRGSWLVLADATVDAPGKAQAKSMADDFVQQWRSPMRRVHTADIHDESAVLAAFAETAGDPEHPPVGVVVFVGGASSRLDDELAAARDTVWSITTVVRAVVGTWHGRSPRLWLVTGGGLSVADDEPGTPAAASLKGLVRVLAFEHPDMRTTLVDLDITQDPLTALSAELRNAGSGSRHDDVIAWRGERRFVERLSRATIDVSKGHPVVRQGASYVVTGGLGGLGLVVARWLVDRGAGRVVLGGRSDPTDEQCNVLAELQTRAEIVVVRGDVASPGVAEKLIETARQSGGQLRGVVHAAAVIEDSLVFSMSRDNLERVWAPKATGALRMHEATADCELDWWLGFSSAASLLGSPGQAAYACASAWLDALVGWRRASGLPAAVINWGPWSEVGVAQALVGSVLDTISVAEGIEALDSLLAADRIRTGVARLRADRALVAFPEIRSISYFTQVVEELDSAGDLGDWGGPDALADLDPGEARRAVTERMCARIAAVMGYTDQSTVEPAVPLDKPLTELGLDSLMAVRIRNGARADFGVEPPVALILQGASLHDLTADLMRQLGLNDPDPALNNADTIRDRARQRAAARHGAAMRRRPKPAVQGG.

The 427-residue stretch at 35-461 (CEPVAVVGIG…GTNAHVVVEQ (427 aa)) folds into the Ketosynthase family 3 (KS3) domain. Active-site for beta-ketoacyl synthase activity residues include C207, H342, and H383. The acyltransferase stretch occupies residues 566-876 (VFVYSGQGSQ…LAAVGVAASE (311 aa)). S654 (for malonyltransferase activity) is an active-site residue. Residues 910-1037 (HPLLGAHIEM…AKVEQSPREC (128 aa)) are N-terminal hotdog fold. Positions 910 to 1076 (HPLLGAHIEM…QHHGPAFAAL (167 aa)) are dehydratase. In terms of domain architecture, PKS/mFAS DH spans 910–1198 (HPLLGAHIEM…LRRVERRAVP (289 aa)). The active-site Proton acceptor; for dehydratase activity is H942. The interval 1050–1198 (GTTVSPADFY…LRRVERRAVP (149 aa)) is C-terminal hotdog fold. The Proton donor; for dehydratase activity role is filled by D1111. The beta-ketoacyl reductase stretch occupies residues 1439–1617 (ASYVVTGGLG…VINWGPWSEV (179 aa)). Residue 1440–1485 (SYVVTGGLGGLGLVVARWLVDRGAGRVVLGGRSDPTDEQCNVLAEL) participates in NADP(+) binding. The Carrier domain maps to 1706 to 1785 (RAVTERMCAR…DLTADLMRQL (80 aa)). S1745 is subject to O-(pantetheine 4'-phosphoryl)serine.

The cofactor is NADP(+). It depends on pantetheine 4'-phosphate as a cofactor.

It carries out the reaction icosanoyl-[(phenol)carboxyphthiodiolenone synthase] + 2 (S)-methylmalonyl-CoA + 3 malonyl-CoA + 5 NADPH + 10 H(+) = C32-carboxyphthiodiolenone-[(phenol)carboxyphthiodiolenone synthase] + 5 CO2 + 5 NADP(+) + 5 CoA + 2 H2O. It catalyses the reaction docosanoyl-[(phenol)carboxyphthiodiolenone synthase] + 2 (S)-methylmalonyl-CoA + 3 malonyl-CoA + 5 NADPH + 10 H(+) = C34-carboxyphthiodiolenone-[(phenol)carboxyphthiodiolenone synthase] + 5 CO2 + 5 NADP(+) + 5 CoA + 2 H2O. The catalysed reaction is 17-(4-hydroxyphenyl)heptadecanoyl-[(phenol)carboxyphthiodiolenone synthase] + 2 (S)-methylmalonyl-CoA + 3 malonyl-CoA + 5 NADPH + 10 H(+) = C35-(phenol)carboxyphthiodiolenone-[(phenol)carboxyphthiodiolenone synthase] + 5 CO2 + 5 NADP(+) + 5 CoA + 2 H2O. The enzyme catalyses 19-(4-hydroxyphenyl)nonadecanoyl-[(phenol)carboxyphthiodiolenone synthase] + 2 (S)-methylmalonyl-CoA + 3 malonyl-CoA + 5 NADPH + 10 H(+) = C37-(phenol)carboxyphthiodiolenone-[(phenol)carboxyphthiodiolenone synthase] + 5 CO2 + 5 NADP(+) + 5 CoA + 2 H2O. The protein operates within lipid metabolism; fatty acid biosynthesis. Functionally, part of the PpsABCDE complex involved in the biosynthesis of the lipid core common to phthiocerols and phenolphthiocerols by successive additions of malonyl-CoA or methylmalonyl-CoA extender units. PpsA can accept as substrate the activated forms of either icosanoyl (C20), docosanoyl (C22) or lignoceroyl (C24) groups from FadD26, or a (4-hydroxyphenyl)-C17 or (4-hydroxyphenyl)-C19 fatty acyl from FadD29. PpsA initiates the biosynthesis and extends its substrate using a malonyl-CoA extender unit. The PpsB and PpsC proteins add the second and third malonyl-CoA extender units. PpsD adds an (R)-methylmalonyl unit and PpsE adds a second (R)-methylmalonyl unit. The incorporation of the methylmalonyl units results in formation of two branched methyl groups in the elongated product. This Mycobacterium bovis (strain ATCC BAA-935 / AF2122/97) protein is Phenolphthiocerol/phthiocerol polyketide synthase subunit C (ppsD).